Consider the following 524-residue polypeptide: BEL1-like homeodomain protein 3 (524 aa).

Residues 171–187 (SRYLKPTQQLLDEVVSV) are SR/KY domain. 2 stretches are compositionally biased toward basic and acidic residues: residues 195–205 (NKKMKNDKGQD) and 216–235 (EDDKSQSQELSPSERQELQS). Residues 195 to 236 (NKKMKNDKGQDFHNGSSDNITEDDKSQSQELSPSERQELQSK) are disordered. Residues 229–300 (ERQELQSKKS…CLRDAIKEQI (72 aa)) form a BELL domain region. Positions 346-408 (AWRPQRGLPE…NARVRLWKPM (63 aa)) form a DNA-binding region, homeobox. Positions 429 to 463 (QDTKKMQETSQLKHEDSSSSQQQNQGNNNNNIPYT) are disordered. Basic and acidic residues predominate over residues 430 to 445 (DTKKMQETSQLKHEDS). A compositionally biased stretch (low complexity) spans 446–459 (SSSQQQNQGNNNNN).

Belongs to the TALE/BELL homeobox family. In terms of assembly, may form heterodimeric complex with the TALE/KNOX protein STM. Interacts with OFP1, OFP2, OFP3, OFP4, OFP5 and OFP15.

The protein localises to the nucleus. Functionally, transcription factor that is responsive of the nuclear import of SHOOT MERISTEMLESS (STM). This Arabidopsis thaliana (Mouse-ear cress) protein is BEL1-like homeodomain protein 3 (BLH3).